Here is a 346-residue protein sequence, read N- to C-terminus: Phosphoribosylformylglycinamidine cyclo-ligase (346 aa).

It belongs to the AIR synthase family.

The protein resides in the cytoplasm. The catalysed reaction is 2-formamido-N(1)-(5-O-phospho-beta-D-ribosyl)acetamidine + ATP = 5-amino-1-(5-phospho-beta-D-ribosyl)imidazole + ADP + phosphate + H(+). The protein operates within purine metabolism; IMP biosynthesis via de novo pathway; 5-amino-1-(5-phospho-D-ribosyl)imidazole from N(2)-formyl-N(1)-(5-phospho-D-ribosyl)glycinamide: step 2/2. The protein is Phosphoribosylformylglycinamidine cyclo-ligase of Bacillus pumilus (strain SAFR-032).